The primary structure comprises 256 residues: Hydroxyethylthiazole kinase (256 aa).

Met38 is a binding site for substrate. ATP-binding residues include Thr114 and Thr159. Gly186 contributes to the substrate binding site.

It belongs to the Thz kinase family. The cofactor is Mg(2+).

The enzyme catalyses 5-(2-hydroxyethyl)-4-methylthiazole + ATP = 4-methyl-5-(2-phosphooxyethyl)-thiazole + ADP + H(+). It participates in cofactor biosynthesis; thiamine diphosphate biosynthesis; 4-methyl-5-(2-phosphoethyl)-thiazole from 5-(2-hydroxyethyl)-4-methylthiazole: step 1/1. Functionally, catalyzes the phosphorylation of the hydroxyl group of 4-methyl-5-beta-hydroxyethylthiazole (THZ). This Streptococcus agalactiae serotype V (strain ATCC BAA-611 / 2603 V/R) protein is Hydroxyethylthiazole kinase.